Here is a 141-residue protein sequence, read N- to C-terminus: 15 kDa lipoprotein (141 aa).

An N-terminal signal peptide occupies residues 1 to 17 (MVKRGRFALCLAVLLGA). Cysteine 18 is lipidated: N-palmitoyl cysteine. The S-diacylglycerol cysteine moiety is linked to residue cysteine 18.

It is found in the cell membrane. The sequence is that of 15 kDa lipoprotein (tpp15) from Treponema pallidum (strain Nichols).